The chain runs to 363 residues: Mitogen-activated protein kinase 4 (363 aa).

Residues 30 to 318 form the Protein kinase domain; it reads YDLVKVVGFG…AKQVMEHPYF (289 aa). Residues 36-44 and K59 contribute to the ATP site; that span reads VGFGACGTV. Residue D156 is the Proton acceptor of the active site. 2 positions are modified to phosphoserine: S186 and S187. T190 carries the post-translational modification Phosphothreonine; by MKK5. Residues 190–192 carry the TQY motif; it reads TQY. Y192 is modified (phosphotyrosine; by MKK5).

This sequence belongs to the protein kinase superfamily. CMGC Ser/Thr protein kinase family. MAP kinase subfamily. Mg(2+) is required as a cofactor. Post-translationally, dually phosphorylated on Thr-190 and Tyr-192, which activates the enzyme.

It catalyses the reaction L-seryl-[protein] + ATP = O-phospho-L-seryl-[protein] + ADP + H(+). It carries out the reaction L-threonyl-[protein] + ATP = O-phospho-L-threonyl-[protein] + ADP + H(+). Its function is as follows. Essential for the two main proliferating life stages, the promastigotes and amastigotes, of the parasite. This chain is Mitogen-activated protein kinase 4, found in Leishmania mexicana.